Here is a 504-residue protein sequence, read N- to C-terminus: MQQSTPYLSFRGIGKTFPGVKALTDISFDCYAGQVHALMGENGAGKSTLLKILSGNYAPTTGSVVINGQEMSFSDTTAALNAGVAIIYQELHLVPEMTVAENIYLGQLPHKGGIVNRSLLNYEAGLQLKHLGMDIDPDTPLKYLSIGQWQMVEIAKALARNAKIIAFDEPTSSLSAREIDNLFRVIRELRKEGRVILYVSHRMEEIFALSDAITVFKDGRYVKTFTDMQQVDHDALVQAMVGRDIGDIYGWQPRSYGEERLRLDAVKAPGVRTPISLAVRSGEIVGLFGLVGAGRSELMKGMFGGTQITAGQVYIDQQPIDIRKPSHAIAAGMMLCPEDRKAEGIIPVHSVRDNINISARRKHVLGGCVINNGWEENNADHHIRSLNIKTPGAEQLIMNLSGGNQQKAILGRWLSEEMKVILLDEPTRGIDVGAKHEIYNVIYALAAQGVAVLFASSDLPEVLGVADRIVVMREGEIAGELLHEQADERQALSLAMPKVSQAVA.

2 ABC transporter domains span residues 8–243 (LSFR…MVGR) and 256–499 (YGEE…MPKV). 40–47 (GENGAGKS) lines the ATP pocket.

It belongs to the ABC transporter superfamily. Arabinose importer (TC 3.A.1.2.2) family. As to quaternary structure, the complex is composed of two ATP-binding proteins (AraG), two transmembrane proteins (AraH) and a solute-binding protein (AraF).

It is found in the cell inner membrane. It carries out the reaction L-arabinose(out) + ATP + H2O = L-arabinose(in) + ADP + phosphate + H(+). Part of the ABC transporter complex AraFGH involved in arabinose import. Responsible for energy coupling to the transport system. The polypeptide is Arabinose import ATP-binding protein AraG (Escherichia coli O157:H7).